The chain runs to 133 residues: Protein OPG104 (133 aa).

Residues 112-132 (IIDIKWLPIGLLALAILILAF) form a helical membrane-spanning segment.

This sequence belongs to the orthopoxvirus OPG104 family. In terms of assembly, part of a stable entry-fusion complex (EFC) which is at least composed of proteins OPG143, OPG147, OPG155, OPG086, OPG094, OPG107, OPG104, and OPG099. Formation of the viral membrane is necessary for the assembly of the complex.

It localises to the virion membrane. Envelope protein part of the entry-fusion complex responsible for the virus membrane fusion with host cell membrane during virus entry. Also plays a role in cell-cell fusion (syncytium formation). The sequence is that of Protein OPG104 (OPG104) from Cynomys gunnisoni (Gunnison's prairie dog).